The following is a 220-amino-acid chain: Translation initiation factor 6 (220 aa).

Belongs to the eIF-6 family.

Functionally, binds to the 50S ribosomal subunit and prevents its association with the 30S ribosomal subunit to form the 70S initiation complex. This is Translation initiation factor 6 from Pyrobaculum aerophilum (strain ATCC 51768 / DSM 7523 / JCM 9630 / CIP 104966 / NBRC 100827 / IM2).